The sequence spans 313 residues: 1-phosphofructokinase (313 aa).

Residues 222–227 and 254–255 contribute to the ATP site; these read SMGAKG and GD. Aspartate 255 acts as the Proton acceptor in catalysis.

This sequence belongs to the carbohydrate kinase PfkB family.

It catalyses the reaction beta-D-fructose 1-phosphate + ATP = beta-D-fructose 1,6-bisphosphate + ADP + H(+). Functionally, catalyzes the ATP-dependent phosphorylation of fructose-l-phosphate to fructose-l,6-bisphosphate. The polypeptide is 1-phosphofructokinase (fruK) (Haemophilus influenzae (strain ATCC 51907 / DSM 11121 / KW20 / Rd)).